We begin with the raw amino-acid sequence, 197 residues long: LexA repressor (197 aa).

The segment at residues Val28 to Val47 is a DNA-binding region (H-T-H motif). Catalysis depends on for autocatalytic cleavage activity residues Ser119 and Lys156.

It belongs to the peptidase S24 family. In terms of assembly, homodimer.

It carries out the reaction Hydrolysis of Ala-|-Gly bond in repressor LexA.. Functionally, represses a number of genes involved in the response to DNA damage (SOS response), including recA and lexA. In the presence of single-stranded DNA, RecA interacts with LexA causing an autocatalytic cleavage which disrupts the DNA-binding part of LexA, leading to derepression of the SOS regulon and eventually DNA repair. This Thermotoga neapolitana protein is LexA repressor.